The chain runs to 398 residues: Interleukin-1 receptor type 2 (398 aa).

The signal sequence occupies residues 1–13 (MLRLYVLVMGVSA). Residues 14–343 (FTLQPAAHTG…FQTLRTTVKE (330 aa)) are Extracellular-facing. 3 consecutive Ig-like C2-type domains span residues 18–124 (PAAH…IELR), 134–223 (PFIS…ITRS), and 237–349 (PVII…STFS). 3 disulfide bridges follow: cysteine 28-cysteine 116, cysteine 50-cysteine 108, and cysteine 152-cysteine 207. N-linked (GlcNAc...) asparagine glycans are attached at residues asparagine 66, asparagine 72, and asparagine 112. N-linked (GlcNAc...) asparagine glycans are attached at residues asparagine 219 and asparagine 277. Residues cysteine 258 and cysteine 326 are joined by a disulfide bond. The tract at residues 329-343 (HNTLSFQTLRTTVKE) is contains proteolytic cleavage site. Residues 344 to 369 (ASSTFSWGIVLAPLSLAFLVLGGIWM) traverse the membrane as a helical segment. The Cytoplasmic segment spans residues 370–398 (HRRCKHRTGKADGLTVLWPHHQDFQSYPK).

It belongs to the interleukin-1 receptor family. As to quaternary structure, associates with IL1RAP to form a non-signaling interleukin-1 receptor complex. Post-translationally, a soluble form (sIL1R2) can also be produced by proteolytic cleavage at the cell surface (shedding) involving a metalloproteinase; hovever, several sIL1R2 forms ranging from 45 and 60 kDa are reported.

It localises to the secreted. The protein localises to the cell membrane. In terms of biological role, non-signaling receptor for IL1A, IL1B and IL1RN. Reduces IL1B activities. Serves as a decoy receptor by competitive binding to IL1B and preventing its binding to IL1R1. Also modulates cellular response through non-signaling association with IL1RAP after binding to IL1B. IL1R2 (membrane and secreted forms) preferentially binds IL1B and poorly IL1A and IL1RN. The secreted IL1R2 recruits secreted IL1RAP with high affinity; this complex formation may be the dominant mechanism for neutralization of IL1B by secreted/soluble receptors. The protein is Interleukin-1 receptor type 2 (IL1R2) of Homo sapiens (Human).